We begin with the raw amino-acid sequence, 156 residues long: 3-dehydroquinate dehydratase (156 aa).

Tyrosine 22 functions as the Proton acceptor in the catalytic mechanism. Residues asparagine 73, histidine 79, and aspartate 86 each contribute to the substrate site. Histidine 99 functions as the Proton donor in the catalytic mechanism. Substrate is bound by residues 100-101 and arginine 110; that span reads LS.

Belongs to the type-II 3-dehydroquinase family. Homododecamer.

It carries out the reaction 3-dehydroquinate = 3-dehydroshikimate + H2O. Its pathway is metabolic intermediate biosynthesis; chorismate biosynthesis; chorismate from D-erythrose 4-phosphate and phosphoenolpyruvate: step 3/7. In terms of biological role, catalyzes a trans-dehydration via an enolate intermediate. In Nitratiruptor sp. (strain SB155-2), this protein is 3-dehydroquinate dehydratase.